The primary structure comprises 334 residues: MPKMYYEKDTDLNLLRGKKVAIIGYGSQGHAHALNLHESGVDVVVGLYNGSKSWAKAEAAGLQVATVADAAKAADLIMILLPDEKQAKIYNEEIAPNLEEGNALVFAHGFNIHFGQVVPPSYVDVFMVAPKGPGHLVRRTYTEGAGVPCLIAVHQDATGKAKQYALAYANGIGGARAGVLETTFKDETETDLFGEQAVLCGGVSELIKAGFETLVEAGYAPENAYFECMHEMKLIVDLLYQGGLSMMRYSISDTAEYGDYQIGRRIITDETKKEMKKVLTEIQDGTFAKNWLLENQTNRPGFNARRRMEAEHPIEKVGKELRGMMSWIDTAKVD.

The KARI N-terminal Rossmann domain maps to 2–182 (PKMYYEKDTD…GGARAGVLET (181 aa)). Residues 25-28 (YGSQ), Ser51, Ser53, and 83-86 (DEKQ) contribute to the NADP(+) site. The active site involves His108. Gly134 provides a ligand contact to NADP(+). The KARI C-terminal knotted domain occupies 183–328 (TFKDETETDL…KELRGMMSWI (146 aa)). Asp191, Glu195, Glu227, and Glu231 together coordinate Mg(2+). Ser252 is a substrate binding site.

The protein belongs to the ketol-acid reductoisomerase family. Requires Mg(2+) as cofactor.

It catalyses the reaction (2R)-2,3-dihydroxy-3-methylbutanoate + NADP(+) = (2S)-2-acetolactate + NADPH + H(+). It carries out the reaction (2R,3R)-2,3-dihydroxy-3-methylpentanoate + NADP(+) = (S)-2-ethyl-2-hydroxy-3-oxobutanoate + NADPH + H(+). The protein operates within amino-acid biosynthesis; L-isoleucine biosynthesis; L-isoleucine from 2-oxobutanoate: step 2/4. It functions in the pathway amino-acid biosynthesis; L-valine biosynthesis; L-valine from pyruvate: step 2/4. Functionally, involved in the biosynthesis of branched-chain amino acids (BCAA). Catalyzes an alkyl-migration followed by a ketol-acid reduction of (S)-2-acetolactate (S2AL) to yield (R)-2,3-dihydroxy-isovalerate. In the isomerase reaction, S2AL is rearranged via a Mg-dependent methyl migration to produce 3-hydroxy-3-methyl-2-ketobutyrate (HMKB). In the reductase reaction, this 2-ketoacid undergoes a metal-dependent reduction by NADPH to yield (R)-2,3-dihydroxy-isovalerate. The protein is Ketol-acid reductoisomerase (NADP(+)) of Clostridium beijerinckii (strain ATCC 51743 / NCIMB 8052) (Clostridium acetobutylicum).